Consider the following 369-residue polypeptide: Translocating chain-associated membrane protein 1-like 1 (369 aa).

Topologically, residues 1-29 (MGLRKKSTKNPPVLSQEFILQNHADIVSC) are cytoplasmic. The helical transmembrane segment at 30-50 (VGMFFLLGLVFEGTAEASIVF) threads the bilayer. Topologically, residues 51–81 (LTLQHSVAVPAAEEQATGSKSLYYYGVKDLA) are lumenal. Residues 82–102 (TVFFYMLVAIIIHATIQEYVL) form a helical membrane-spanning segment. Residues 103–121 (DKINKRMQFTKAKQNKFNE) lie on the Cytoplasmic side of the membrane. In terms of domain architecture, TLC spans 117–326 (NKFNESGQFS…TLWLQRWVED (210 aa)). The chain crosses the membrane as a helical span at residues 122–142 (SGQFSVFYFFSCIWGTFILIS). Residues 143–164 (ENCLSDPTLIWKARPHSMMTFQ) lie on the Lumenal side of the membrane. Residues 165–185 (MKFFYISQLAYWFHAFPELYF) form a helical membrane-spanning segment. The Cytoplasmic segment spans residues 186–196 (QKTKKQDIPRQ). A helical membrane pass occupies residues 197 to 215 (LVYIGLHLFHITGAYLLYL). At 216–219 (NHLG) the chain is on the lumenal side. Residues 220-242 (LLLLVLHYFVELLSHMCGLFYFS) form a helical membrane-spanning segment. Residues 243 to 249 (DEKYQKG) lie on the Cytoplasmic side of the membrane. The helical transmembrane segment at 250–270 (ISLWAIVFILGRLVTLIVSVL) threads the bilayer. Topologically, residues 271–297 (TVGFHLAGSQNRNPDALTGNVNVLAAK) are lumenal. Residues 298–318 (IAVLSSSCTIQAYVTWNLITL) form a helical membrane-spanning segment. Over 319-369 (WLQRWVEDSNIQASCMKKKRSRSSKKRTENGVGVETSNRVDCPPKRKEKSS) the chain is Cytoplasmic. The interval 335 to 369 (KKKRSRSSKKRTENGVGVETSNRVDCPPKRKEKSS) is disordered. The segment covering 360–369 (CPPKRKEKSS) has biased composition (basic and acidic residues).

Belongs to the TRAM family.

It localises to the endoplasmic reticulum membrane. Functionally, stimulatory or required for the translocation of secretory proteins across the ER membrane. This is Translocating chain-associated membrane protein 1-like 1 (TRAM1L1) from Homo sapiens (Human).